Reading from the N-terminus, the 206-residue chain is Triosephosphate isomerase (206 aa).

His76 functions as the Electrophile in the catalytic mechanism. Glu146 (proton acceptor) is an active-site residue.

It belongs to the triosephosphate isomerase family. In terms of assembly, homodimer.

It carries out the reaction D-glyceraldehyde 3-phosphate = dihydroxyacetone phosphate. It participates in carbohydrate biosynthesis; gluconeogenesis. Its pathway is carbohydrate degradation; glycolysis; D-glyceraldehyde 3-phosphate from glycerone phosphate: step 1/1. The chain is Triosephosphate isomerase (Tpi) from Anopheles merus (Mosquito).